The following is a 270-amino-acid chain: ATP synthase subunit a (270 aa).

5 helical membrane passes run I40–V60, I98–V118, D143–I163, L208–W228, and A239–V259.

The protein belongs to the ATPase A chain family. In terms of assembly, F-type ATPases have 2 components, CF(1) - the catalytic core - and CF(0) - the membrane proton channel. CF(1) has five subunits: alpha(3), beta(3), gamma(1), delta(1), epsilon(1). CF(0) has three main subunits: a(1), b(2) and c(9-12). The alpha and beta chains form an alternating ring which encloses part of the gamma chain. CF(1) is attached to CF(0) by a central stalk formed by the gamma and epsilon chains, while a peripheral stalk is formed by the delta and b chains.

It localises to the cell inner membrane. Key component of the proton channel; it plays a direct role in the translocation of protons across the membrane. The chain is ATP synthase subunit a from Vibrio vulnificus (strain CMCP6).